Consider the following 311-residue polypeptide: Acetaldehyde dehydrogenase 1 (311 aa).

11–14 serves as a coordination point for NAD(+); that stretch reads SGNI. The Acyl-thioester intermediate role is filled by C129. NAD(+)-binding positions include 161–169 and N288; that span reads SAGPGTRAN.

The protein belongs to the acetaldehyde dehydrogenase family.

The catalysed reaction is acetaldehyde + NAD(+) + CoA = acetyl-CoA + NADH + H(+). In Novosphingobium aromaticivorans (strain ATCC 700278 / DSM 12444 / CCUG 56034 / CIP 105152 / NBRC 16084 / F199), this protein is Acetaldehyde dehydrogenase 1.